The following is a 121-amino-acid chain: MAVCIIDHDNIRGVIYFEPVHGKDKVIGLKSGTYSLIIHRYGDISQGCDSIGSPEIFIGNIFVNRYGVAYVYLDTDVNISTIIGKALSISKNDQRLACGVIGISYINEKIIHFLTINENGV.

Cysteines 48 and 98 form a disulfide.

The protein belongs to the Cu-Zn superoxide dismutase family.

The protein resides in the host cytoplasm. In terms of biological role, virion protein with no enzymatic activity. This chain is Cu-Zn superoxide dismutase-like protein, found in Vaccinia virus (strain Ankara) (VACV).